A 442-amino-acid chain; its full sequence is O-acetyl-L-homoserine sulfhydrylase (442 aa).

Residues 1 to 32 (MVGPSGESMPRNFKPETIALHGGQEPDPTTTS) are disordered. K216 is modified (N6-(pyridoxal phosphate)lysine).

It belongs to the trans-sulfuration enzymes family. Requires pyridoxal 5'-phosphate as cofactor.

The enzyme catalyses O-acetyl-L-homoserine + hydrogen sulfide = L-homocysteine + acetate. Its pathway is amino-acid biosynthesis; L-methionine biosynthesis via de novo pathway; L-homocysteine from O-acetyl-L-homoserine: step 1/1. Its activity is regulated as follows. Feedback inhibited at very high concentrations of methionine or S-adenosylmethionine. Its function is as follows. Catalyzes the conversion of O-acetyl-L-homoserine (OAH) into homocysteine in the methionine biosynthesis pathway. Can also use O-succinyl-homoserine (OSH), although at low efficiency. The sequence is that of O-acetyl-L-homoserine sulfhydrylase from Leptospira meyeri.